The sequence spans 239 residues: Ribonuclease PH (239 aa).

Residues arginine 86 and 124 to 126 contribute to the phosphate site; that span reads GTR.

This sequence belongs to the RNase PH family. Homohexameric ring arranged as a trimer of dimers.

The catalysed reaction is tRNA(n+1) + phosphate = tRNA(n) + a ribonucleoside 5'-diphosphate. Functionally, phosphorolytic 3'-5' exoribonuclease that plays an important role in tRNA 3'-end maturation. Removes nucleotide residues following the 3'-CCA terminus of tRNAs; can also add nucleotides to the ends of RNA molecules by using nucleoside diphosphates as substrates, but this may not be physiologically important. Probably plays a role in initiation of 16S rRNA degradation (leading to ribosome degradation) during starvation. This is Ribonuclease PH from Sinorhizobium medicae (strain WSM419) (Ensifer medicae).